The sequence spans 646 residues: Peptidylprolyl isomerase domain and WD repeat-containing protein 1 (646 aa).

The segment at 1 to 50 (MATESGSDSQLRRRRRRDPEGSEKTELSEREPALAVAGSEENDDENEERW) is disordered. Residue Ala-2 is modified to N-acetylalanine. The segment covering 17–32 (RDPEGSEKTELSEREP) has biased composition (basic and acidic residues). WD repeat units lie at residues 88–126 (MHRDVITHVVCTKTDFIITASHDGHVKFWKKIEEGIEFV), 131–170 (SHLGVIESIAVSSEGALFCSVGDDKAMKVFDVVNFDMINM), 221–260 (LHVSPLTQIRLNPVYKAVVSSDKSGMIEYWTGPPHEYKFP), and 278–319 (KCKA…RVFD). Residues 490–645 (VSDSAIVHTS…EDVSIINITV (156 aa)) enclose the PPIase cyclophilin-type domain.

It belongs to the cyclophilin-type PPIase family. PPIL1 subfamily. As to quaternary structure, identified in the spliceosome C complex.

Its subcellular location is the nucleus. The catalysed reaction is [protein]-peptidylproline (omega=180) = [protein]-peptidylproline (omega=0). With respect to regulation, inhibited by cyclosporin A (CsA). In terms of biological role, PPIase that catalyzes the cis-trans isomerization of proline imidic peptide bonds in oligopeptides and may therefore assist protein folding. May be involved in pre-mRNA splicing. The chain is Peptidylprolyl isomerase domain and WD repeat-containing protein 1 from Mus musculus (Mouse).